The primary structure comprises 572 residues: Proline--tRNA ligase (572 aa).

Belongs to the class-II aminoacyl-tRNA synthetase family. ProS type 1 subfamily. In terms of assembly, homodimer.

The protein localises to the cytoplasm. It catalyses the reaction tRNA(Pro) + L-proline + ATP = L-prolyl-tRNA(Pro) + AMP + diphosphate. Its function is as follows. Catalyzes the attachment of proline to tRNA(Pro) in a two-step reaction: proline is first activated by ATP to form Pro-AMP and then transferred to the acceptor end of tRNA(Pro). As ProRS can inadvertently accommodate and process non-cognate amino acids such as alanine and cysteine, to avoid such errors it has two additional distinct editing activities against alanine. One activity is designated as 'pretransfer' editing and involves the tRNA(Pro)-independent hydrolysis of activated Ala-AMP. The other activity is designated 'posttransfer' editing and involves deacylation of mischarged Ala-tRNA(Pro). The misacylated Cys-tRNA(Pro) is not edited by ProRS. The polypeptide is Proline--tRNA ligase (Klebsiella pneumoniae (strain 342)).